The chain runs to 137 residues: Probable 4-amino-4-deoxy-L-arabinose-phosphoundecaprenol flippase subunit ArnF (137 aa).

Over 1–3 the chain is Cytoplasmic; the sequence is MNA. A helical transmembrane segment spans residues 4 to 24; sequence LRGWLAALGSVLLASAAQLGM. Residues 25–44 are Periplasmic-facing; that stretch reads RWGMSRLPLPEAWAGQTPER. A helical transmembrane segment spans residues 45-65; it reads AALLAVALAVAAYAASLLCWL. The Cytoplasmic portion of the chain corresponds to 66–76; sequence AALRHLPLGRA. A helical membrane pass occupies residues 77–97; the sequence is YSLLSASYALVYLLAASLPAF. The Periplasmic segment spans residues 98 to 100; the sequence is DET. The helical transmembrane segment at 101 to 121 threads the bilayer; that stretch reads FSTSKTLGVGLVVLGVLTVNA. Residues 122–137 are Cytoplasmic-facing; that stretch reads RRTAAAPAHHPSRKAP.

It belongs to the ArnF family. In terms of assembly, heterodimer of ArnE and ArnF.

The protein localises to the cell inner membrane. It participates in bacterial outer membrane biogenesis; lipopolysaccharide biosynthesis. Translocates 4-amino-4-deoxy-L-arabinose-phosphoundecaprenol (alpha-L-Ara4N-phosphoundecaprenol) from the cytoplasmic to the periplasmic side of the inner membrane. The chain is Probable 4-amino-4-deoxy-L-arabinose-phosphoundecaprenol flippase subunit ArnF from Pseudomonas aeruginosa (strain ATCC 15692 / DSM 22644 / CIP 104116 / JCM 14847 / LMG 12228 / 1C / PRS 101 / PAO1).